A 52-amino-acid polypeptide reads, in one-letter code: UPF0181 protein VPA0916 (52 aa).

Belongs to the UPF0181 family.

In Vibrio parahaemolyticus serotype O3:K6 (strain RIMD 2210633), this protein is UPF0181 protein VPA0916.